The chain runs to 834 residues: Taste receptor type 1 member 2 (834 aa).

Positions 1-19 (MGPRARTVCFLFFLLWVLA) are cleaved as a signal peptide. Topologically, residues 20–561 (ELAENSDFHL…SFLEWHEAAT (542 aa)) are extracellular. N-linked (GlcNAc...) asparagine glycans are attached at residues Asn-84, Asn-292, Asn-312, Asn-363, Asn-423, Asn-482, and Asn-522. A helical membrane pass occupies residues 562–582 (IAVALLAALGFLXXXXXXXXX). Topologically, residues 583-597 (XXXXXXPMVRSAGGP) are cytoplasmic. Residues 598–618 (MCFLMLTLLLVAYMVVPVYVG) form a helical membrane-spanning segment. Topologically, residues 619–630 (PPKVTTCLCRQA) are extracellular. The chain crosses the membrane as a helical span at residues 631 to 651 (LFPVCFTICISCITMRSFQIV). The Cytoplasmic portion of the chain corresponds to 652–676 (CVFKMASRFPRAYSYWVRYQGSYVS). Residues 677–697 (VAFITALKVVTVVISLLATGL) traverse the membrane as a helical segment. Topologically, residues 698–722 (NPTTRADTDDPKIMIISCNPNYRNS) are extracellular. A helical transmembrane segment spans residues 723–743 (LLFNTSLDLLLSVVGFSFAYM). Over 744–755 (GKELPTNYNEAK) the chain is Cytoplasmic. Residues 756–776 (FITFSMTFYFTSSVSLCTFMS) form a helical membrane-spanning segment. Over 777 to 779 (VYD) the chain is Extracellular. A helical transmembrane segment spans residues 780–800 (GVLVTIVDLLVTVFNLLAISL). Residues 801 to 834 (GYFGPKCYMILFYPERNTPAYFNSMIQGYTMRRD) lie on the Cytoplasmic side of the membrane.

It belongs to the G-protein coupled receptor 3 family. TAS1R subfamily. Forms heterodimers with TAS1R3.

Its subcellular location is the cell membrane. In terms of biological role, putative taste receptor. TAS1R2/TAS1R3 recognizes diverse natural and synthetic sweeteners. This chain is Taste receptor type 1 member 2 (TAS1R2), found in Cebuella pygmaea (Pygmy marmoset).